The chain runs to 537 residues: CTP synthase (537 aa).

The amidoligase domain stretch occupies residues 1 to 265; that stretch reads MTKFIFVTGG…GKYLVKRLGL (265 aa). A CTP-binding site is contributed by S13. Residue S13 coordinates UTP. ATP is bound at residue 14 to 19; that stretch reads GLGKGI. Y54 is an L-glutamine binding site. ATP is bound at residue D71. Mg(2+) is bound by residues D71 and E139. Residues 146 to 148, 186 to 191, and K222 each bind CTP; these read DIE and KTKPTQ. UTP-binding positions include 186 to 191 and K222; that span reads KTKPTQ. Residues 290-532 form the Glutamine amidotransferase type-1 domain; the sequence is EIAIVGKYVK…VKAAKEYKQE (243 aa). An L-glutamine-binding site is contributed by G351. Residue C378 is the Nucleophile; for glutamine hydrolysis of the active site. L-glutamine is bound by residues 379–382, E402, and R459; that span reads FGFQ. Catalysis depends on residues H505 and E507.

This sequence belongs to the CTP synthase family. As to quaternary structure, homotetramer.

It catalyses the reaction UTP + L-glutamine + ATP + H2O = CTP + L-glutamate + ADP + phosphate + 2 H(+). The catalysed reaction is L-glutamine + H2O = L-glutamate + NH4(+). The enzyme catalyses UTP + NH4(+) + ATP = CTP + ADP + phosphate + 2 H(+). Its pathway is pyrimidine metabolism; CTP biosynthesis via de novo pathway; CTP from UDP: step 2/2. Its activity is regulated as follows. Allosterically activated by GTP, when glutamine is the substrate; GTP has no effect on the reaction when ammonia is the substrate. The allosteric effector GTP functions by stabilizing the protein conformation that binds the tetrahedral intermediate(s) formed during glutamine hydrolysis. Inhibited by the product CTP, via allosteric rather than competitive inhibition. Functionally, catalyzes the ATP-dependent amination of UTP to CTP with either L-glutamine or ammonia as the source of nitrogen. Regulates intracellular CTP levels through interactions with the four ribonucleotide triphosphates. This chain is CTP synthase, found in Pyrococcus abyssi (strain GE5 / Orsay).